The primary structure comprises 330 residues: Ketol-acid reductoisomerase (NADP(+)) (330 aa).

The KARI N-terminal Rossmann domain maps to 2-182 (ARMYYDADAN…GGTRAGILET (181 aa)). Residues 25–28 (YGSQ), Ser51, Ser53, and 83–86 (DEFQ) contribute to the NADP(+) site. His108 is a catalytic residue. Gly134 serves as a coordination point for NADP(+). The region spanning 183–328 (SFREETETDL…KDLRAMFSWL (146 aa)) is the KARI C-terminal knotted domain. Mg(2+) is bound by residues Asp191, Glu195, Glu227, and Glu231. Ser252 is a substrate binding site.

It belongs to the ketol-acid reductoisomerase family. It depends on Mg(2+) as a cofactor.

It catalyses the reaction (2R)-2,3-dihydroxy-3-methylbutanoate + NADP(+) = (2S)-2-acetolactate + NADPH + H(+). The enzyme catalyses (2R,3R)-2,3-dihydroxy-3-methylpentanoate + NADP(+) = (S)-2-ethyl-2-hydroxy-3-oxobutanoate + NADPH + H(+). It functions in the pathway amino-acid biosynthesis; L-isoleucine biosynthesis; L-isoleucine from 2-oxobutanoate: step 2/4. Its pathway is amino-acid biosynthesis; L-valine biosynthesis; L-valine from pyruvate: step 2/4. In terms of biological role, involved in the biosynthesis of branched-chain amino acids (BCAA). Catalyzes an alkyl-migration followed by a ketol-acid reduction of (S)-2-acetolactate (S2AL) to yield (R)-2,3-dihydroxy-isovalerate. In the isomerase reaction, S2AL is rearranged via a Mg-dependent methyl migration to produce 3-hydroxy-3-methyl-2-ketobutyrate (HMKB). In the reductase reaction, this 2-ketoacid undergoes a metal-dependent reduction by NADPH to yield (R)-2,3-dihydroxy-isovalerate. This is Ketol-acid reductoisomerase (NADP(+)) from Synechococcus elongatus (strain ATCC 33912 / PCC 7942 / FACHB-805) (Anacystis nidulans R2).